A 357-amino-acid chain; its full sequence is uncharacterized protein (357 aa).

Ser72 bears the Phosphoserine mark. Disordered stretches follow at residues 79–98 (GVNE…RPSR), 264–290 (QKQL…GASV), and 323–357 (ISDE…EPLK). Acidic residues predominate over residues 324–335 (SDEDEEDEEEDS).

This is an uncharacterized protein from Saccharomyces cerevisiae (strain ATCC 204508 / S288c) (Baker's yeast).